The following is a 312-amino-acid chain: Olfactory receptor 1D5 (312 aa).

At M1–R25 the chain is on the extracellular side. N5 carries N-linked (GlcNAc...) asparagine glycosylation. A helical transmembrane segment spans residues I26 to I49. Topologically, residues S50–T57 are cytoplasmic. The chain crosses the membrane as a helical span at residues P58–P79. The Extracellular portion of the chain corresponds to K80–Q100. A disulfide bridge connects residues C97 and C189. The helical transmembrane segment at L101–Y120 threads the bilayer. The Cytoplasmic segment spans residues D121–L140. The helical transmembrane segment at C141 to L158 threads the bilayer. At L159–H196 the chain is on the extracellular side. Residues T197 to R220 form a helical membrane-spanning segment. Over I221–T237 the chain is Cytoplasmic. A helical transmembrane segment spans residues F238–L260. At Q261–S271 the chain is on the extracellular side. A helical membrane pass occupies residues V272–L291. The Cytoplasmic segment spans residues R292–K312.

This sequence belongs to the G-protein coupled receptor 1 family.

It is found in the cell membrane. In terms of biological role, odorant receptor. This is Olfactory receptor 1D5 (OR1D5) from Homo sapiens (Human).